We begin with the raw amino-acid sequence, 103 residues long: G0/G1 switch protein 2 (103 aa).

As to quaternary structure, directly interacts with BCL2; this interaction prevents the formation of the anti-apoptotic BAX-BCL2 complex.

The protein localises to the mitochondrion. Promotes apoptosis by binding to BCL2, hence preventing the formation of protective BCL2-BAX heterodimers. This is G0/G1 switch protein 2 (G0s2) from Rattus norvegicus (Rat).